Consider the following 94-residue polypeptide: Surfactant-associated protein 3 (94 aa).

In terms of tissue distribution, found in lung alveolar cells type I and II, as well as alveolar macrophages (at protein level). Detected also in testis and kidney. Expressed by different tissues of the ocular system like cornea, conjuctiva, lacrimal gland, eyelid and efferent tear ducts (at protein level). From these tissues is secreted into the tear film (at protein level).

It localises to the cytoplasm. The protein localises to the secreted. Functionally, putative surfactant protein. May be involved in wound healing and in the reduction of the surface tension at the ocular surface. The polypeptide is Surfactant-associated protein 3 (SFTA3) (Homo sapiens (Human)).